Reading from the N-terminus, the 87-residue chain is Small ribosomal subunit protein bS20 (87 aa).

This sequence belongs to the bacterial ribosomal protein bS20 family.

Its function is as follows. Binds directly to 16S ribosomal RNA. This is Small ribosomal subunit protein bS20 from Clostridium botulinum (strain Alaska E43 / Type E3).